The following is a 450-amino-acid chain: Glutamyl-tRNA reductase (450 aa).

Substrate-binding positions include 50-53, serine 109, 114-116, and glutamine 120; these read TCNR and EPQ. Cysteine 51 functions as the Nucleophile in the catalytic mechanism. Residue 189–194 coordinates NADP(+); that stretch reads GAGEMA. The segment at 422–450 is disordered; that stretch reads NEPEQPEAHKNRKRPQPDLPAGCPGKTIL.

Belongs to the glutamyl-tRNA reductase family. Homodimer.

It carries out the reaction (S)-4-amino-5-oxopentanoate + tRNA(Glu) + NADP(+) = L-glutamyl-tRNA(Glu) + NADPH + H(+). It functions in the pathway porphyrin-containing compound metabolism; protoporphyrin-IX biosynthesis; 5-aminolevulinate from L-glutamyl-tRNA(Glu): step 1/2. Catalyzes the NADPH-dependent reduction of glutamyl-tRNA(Glu) to glutamate 1-semialdehyde (GSA). The sequence is that of Glutamyl-tRNA reductase from Oleidesulfovibrio alaskensis (strain ATCC BAA-1058 / DSM 17464 / G20) (Desulfovibrio alaskensis).